Here is a 288-residue protein sequence, read N- to C-terminus: Syntaxin-1B (288 aa).

Residues 1–13 (MKDRTQELRSAKD) are compositionally biased toward basic and acidic residues. A disordered region spans residues 1 to 20 (MKDRTQELRSAKDSDDEEEV). Residues 1-264 (MKDRTQELRS…KYQSKARRKK (264 aa)) lie on the Cytoplasmic side of the membrane. Phosphoserine is present on residues S10 and S14. Residues 29–104 (MDEFFEQVEE…IEQSIEQEEG (76 aa)) are a coiled coil. Residues 191–253 (LNEIETRHNE…ERAVSDTKKA (63 aa)) form the t-SNARE coiled-coil homology domain. The chain crosses the membrane as a helical; Anchor for type IV membrane protein span at residues 265 to 288 (IMIIICCVVLGVVLASSIGGTLGL).

It belongs to the syntaxin family. In terms of assembly, interacts with OTOF. Interacts with SYT6 and SYT8; the interaction is Ca(2+)-dependent. Phosphorylated by CK2.

The protein localises to the membrane. It is found in the nucleus. It localises to the cytoplasm. Its subcellular location is the cytoskeleton. The protein resides in the microtubule organizing center. The protein localises to the centrosome. It is found in the spindle. Functionally, potentially involved in docking of synaptic vesicles at presynaptic active zones. May mediate Ca(2+)-regulation of exocytosis acrosomal reaction in sperm. In Homo sapiens (Human), this protein is Syntaxin-1B (STX1B).